The following is a 189-amino-acid chain: 3-hydroxyanthranilate 3,4-dioxygenase (189 aa).

Arginine 49 provides a ligand contact to O2. The Fe cation site is built by histidine 53, glutamate 59, and histidine 97. Glutamate 59 lines the substrate pocket. Substrate is bound by residues arginine 101 and glutamate 112. Positions 127, 130, 165, and 168 each coordinate Fe cation.

It belongs to the 3-HAO family. Homodimer. Fe(2+) serves as cofactor.

The enzyme catalyses 3-hydroxyanthranilate + O2 = (2Z,4Z)-2-amino-3-carboxymuconate 6-semialdehyde. The protein operates within cofactor biosynthesis; NAD(+) biosynthesis; quinolinate from L-kynurenine: step 3/3. Functionally, catalyzes the oxidative ring opening of 3-hydroxyanthranilate to 2-amino-3-carboxymuconate semialdehyde, which spontaneously cyclizes to quinolinate. The polypeptide is 3-hydroxyanthranilate 3,4-dioxygenase (Cupriavidus pinatubonensis (strain JMP 134 / LMG 1197) (Cupriavidus necator (strain JMP 134))).